Reading from the N-terminus, the 1377-residue chain is MAQLNGSNGTGLLYKPRQYQYEMFEASLKENIIVAMDTGTGKTQIALLRIAHQLEGGGPRKLTWFLTPTVALCLQQYEVIRSHLPAVRACTITGLDKVERWKSQYIWDELLKDKQVVVSTHAVLFEALTHGFVRISQLGLLIFDEAHHCMRRHPANMIMLDFYHPTLRKHGRDSVPCILGLTASPVVRSKSQEMKTLESNLDSICKTPQVHKQELTTYAHRPELLPIICKAIDEGPGGRALQALEHAWDTADIDGDPDAIPQNGSLLNGSGEYKALMVRKTLCNEQIKRFVDRSRHIFAELGEWAADYYICTSVEQLRTTIRDQSLTMDWEDEERAYLSNFLSKLPVAEVQANLADPNNFTMSPKLAALINFLDKFDDPEFSGLIFVKQRVTVSVLARLLSLHPQTRDRFRCAAYVGMSVGSCRQDMVGDWHNAKKQRGTMDDFRSGRKNLIVTTSVLEEGIDVTACRVVVCFDKPANLKSFIQRRGRARQQKSTYAIMFSTADEHGDLRRWQILEQAMVEAYQDEERRLREAEAQEAVDENVPEMITVEATGAVITPDSVVTHLYHFCAVLPEERYVDNRPEFSFEKDRQGLIKGTVILPSCVHPKVRRIQGKLWWKSERAAVKETAFQAYRALYEFGLLNDHLLPLTKNPEMRPTDHTTLPSLLDVSEQYDPWTDWANSWSCPDVHQMRIALESNGHPADGLIMKLIGPTNLPPLAPITLFWDRDTRLTLSFDVPERITTVTDNCIANMRTVTALYIQAPRSRNLLNNDDFVTLFGPDLPSTELADWLLRNAGYETAHEAYSRGTMPGAMGIIRDLSRYDEPFFCHRWIESETGLIEIECRPIPRRRNFLHPPALDNGQADAIVESEHGSAKVHMVAAESCTVDKLPVSTAIFGLFIPHIVDRLESTLIANRLCATILCDVGFADIQHVITAIMAPSAQGVTNYQRYEFLGDSILKYIVSCQLFFQNLNWPEGFLTEGRTTIVQNPRLTRAALDAGLDSFIITKALTPRRWIAPLISTRVGAAPVKRQMSAKVLADVIEALIGAAYLDGGHSKAQICTHCFLPEVNRQPLDIPSLITQTEHGRTARHIIDGDLQRHLGYTFKNEDLLIEALTHPSCQHDQTTQSYQRLEFLGDAILDMVIVPIIFQYSNKISPGDMTLIKHAVVNANLLGFFCMEFSIEQDKTKVEKTPDGRFAVKSETQHVELWRFMRFNSLDLQTSRDAALDRHRRLRNKILTSLYHGPSYPWQSLSQLYADKFFSDIVESVLGAIYVDSGGDLSACERFLEQIGLLSYVRRVLLDGINVTHPRNIAQRLSKGDALFNLRRVSDEKGRSMYRCTVTMNDAQIVLVEGCQCGEEAEVRAANETIEFLQRRQEVV.

One can recognise a Helicase ATP-binding domain in the interval 23-203 (MFEASLKENI…MKTLESNLDS (181 aa)). Residue 36 to 43 (MDTGTGKT) participates in ATP binding. Residues 144-147 (DEAH) carry the DEAH box motif. The Helicase C-terminal domain occupies 368-531 (ALINFLDKFD…AYQDEERRLR (164 aa)). The Dicer dsRNA-binding fold domain occupies 561–655 (VVTHLYHFCA…LPLTKNPEMR (95 aa)). RNase III domains follow at residues 914–1052 (RLCA…LDGG) and 1092–1275 (DGDL…VDSG). Residues Glu1131, Asp1261, and Glu1264 each contribute to the Mg(2+) site.

This sequence belongs to the helicase family. Dicer subfamily. The cofactor is Mg(2+). Mn(2+) serves as cofactor.

In terms of biological role, dicer-like endonuclease involved in cleaving double-stranded RNA in the RNA interference (RNAi) pathway. Produces 21 to 25 bp dsRNAs (siRNAs) which target the selective destruction of homologous RNAs leading to sequence-specific suppression of gene expression, called post-transcriptional gene silencing (PTGS). Part of a broad host defense response against viral infection and transposons. This is Dicer-like protein 2 (dcl2) from Aspergillus oryzae (strain ATCC 42149 / RIB 40) (Yellow koji mold).